A 65-amino-acid chain; its full sequence is Large ribosomal subunit protein uL29c (65 aa).

Belongs to the universal ribosomal protein uL29 family.

It is found in the plastid. Its subcellular location is the chloroplast. The chain is Large ribosomal subunit protein uL29c (rpl29) from Guillardia theta (Cryptophyte).